Consider the following 466-residue polypeptide: Soluble pyridine nucleotide transhydrogenase (466 aa).

Residue 36-45 coordinates FAD; it reads ERYQNVGGGC.

Belongs to the class-I pyridine nucleotide-disulfide oxidoreductase family. Requires FAD as cofactor.

The protein localises to the cytoplasm. It carries out the reaction NAD(+) + NADPH = NADH + NADP(+). Conversion of NADPH, generated by peripheral catabolic pathways, to NADH, which can enter the respiratory chain for energy generation. The polypeptide is Soluble pyridine nucleotide transhydrogenase (Escherichia coli O127:H6 (strain E2348/69 / EPEC)).